Here is a 1478-residue protein sequence, read N- to C-terminus: FYVE and coiled-coil domain-containing protein 1 (1478 aa).

Alanine 2 is subject to N-acetylalanine. A coiled-coil region spans residues 4 to 33; the sequence is TNAESQLQRIIRDLQDAVTELSKEFQEAGE. In terms of domain architecture, RUN spans 36–169; the sequence is TDDSTSLHKF…VQFDLASRGF (134 aa). Position 196 is a phosphoserine (serine 196). Positions 225-280 form a coiled coil; the sequence is NNEALEGFDEMRLELDQLEVREKQLRERMQQLDRENQELRAAVSQQGEQLQTERER. Serine 342 carries the post-translational modification Phosphoserine. The residue at position 381 (threonine 381) is a Phosphothreonine. 2 coiled-coil regions span residues 394–555 and 596–1151; these read SDAA…MLER and QEAQ…KDAL. The segment at 586–613 is disordered; the sequence is GKPEEEQRGLQEAQLDDTKVQEGSQEEE. A Phosphoserine modification is found at serine 878. The FYVE-type zinc finger occupies 1173–1231; that stretch reads DTEANHCLDCKREFSWMVRRHHCRICGRIFCYYCCNNYVLSKHGGKKERCCRACFQKLS. Positions 1179, 1182, 1195, 1198, 1203, 1206, 1223, and 1226 each coordinate Zn(2+). The span at 1231–1261 shows a compositional bias: low complexity; that stretch reads SEGPGSPDSSGSGTSQGEPSPALSPASPGPQ. Disordered regions lie at residues 1231–1277 and 1294–1332; these read SEGP…PPDD and SGSS…DMPV. 2 stretches are compositionally biased toward polar residues: residues 1294–1305 and 1314–1324; these read SGSSLPETPTET and EQDTTSTSLTP. In terms of domain architecture, GOLD spans 1337 to 1466; that stretch reads EICLLKSGEL…SKKVFYHLTV (130 aa).

Can form homodimers. Interacts (via C-terminus) with MAP1LC3B. Interacts with RAB7A; the interaction with RAB7A induces FYCO1 recruitment to late endosomal/lysosomal compartments. Interacts with MAP1LC3B. In terms of tissue distribution, expressed in heart and skeletal muscle.

The protein localises to the cytoplasmic vesicle. It localises to the autophagosome. It is found in the endosome. Its subcellular location is the lysosome. Its function is as follows. May mediate microtubule plus end-directed vesicle transport. This chain is FYVE and coiled-coil domain-containing protein 1 (FYCO1), found in Homo sapiens (Human).